The sequence spans 132 residues: Protein FasE (132 aa).

In Escherichia coli, this protein is Protein FasE (fasE).